Consider the following 474-residue polypeptide: tRNA-2-methylthio-N(6)-dimethylallyladenosine synthase (474 aa).

The region spanning 3–120 is the MTTase N-terminal domain; sequence KKLHIKTWGC…LPEMINHVNG (118 aa). [4Fe-4S] cluster-binding residues include Cys-12, Cys-49, Cys-83, Cys-157, Cys-161, and Cys-164. The Radical SAM core domain occupies 143 to 375; sequence RAEGPTAFVS…QERITQQAMQ (233 aa). Residues 378–441 enclose the TRAM domain; sequence RRMKGKVQRI…PNSLRGVLLR (64 aa).

Belongs to the methylthiotransferase family. MiaB subfamily. Monomer. It depends on [4Fe-4S] cluster as a cofactor.

The protein resides in the cytoplasm. The catalysed reaction is N(6)-dimethylallyladenosine(37) in tRNA + (sulfur carrier)-SH + AH2 + 2 S-adenosyl-L-methionine = 2-methylsulfanyl-N(6)-dimethylallyladenosine(37) in tRNA + (sulfur carrier)-H + 5'-deoxyadenosine + L-methionine + A + S-adenosyl-L-homocysteine + 2 H(+). Functionally, catalyzes the methylthiolation of N6-(dimethylallyl)adenosine (i(6)A), leading to the formation of 2-methylthio-N6-(dimethylallyl)adenosine (ms(2)i(6)A) at position 37 in tRNAs that read codons beginning with uridine. The sequence is that of tRNA-2-methylthio-N(6)-dimethylallyladenosine synthase from Sodalis glossinidius (strain morsitans).